We begin with the raw amino-acid sequence, 231 residues long: Cytidylate kinase (231 aa).

Residue 18–26 (GPSGTGKSS) participates in ATP binding.

It belongs to the cytidylate kinase family. Type 1 subfamily.

It localises to the cytoplasm. It carries out the reaction CMP + ATP = CDP + ADP. The enzyme catalyses dCMP + ATP = dCDP + ADP. The protein is Cytidylate kinase of Streptomyces griseus subsp. griseus (strain JCM 4626 / CBS 651.72 / NBRC 13350 / KCC S-0626 / ISP 5235).